Here is a 146-residue protein sequence, read N- to C-terminus: Leptin (146 aa).

Residues Cys-96 and Cys-146 are joined by a disulfide bond.

This sequence belongs to the leptin family.

It localises to the secreted. In terms of biological role, key player in the regulation of energy balance and body weight control. Once released into the circulation, has central and peripheral effects by binding LEPR, found in many tissues, which results in the activation of several major signaling pathways. In the hypothalamus, acts as an appetite-regulating factor that induces a decrease in food intake and an increase in energy consumption by inducing anorexinogenic factors and suppressing orexigenic neuropeptides, also regulates bone mass and secretion of hypothalamo-pituitary-adrenal hormones. In the periphery, increases basal metabolism, influences reproductive function, regulates pancreatic beta-cell function and insulin secretion, is pro-angiogenic for endothelial cell and affects innate and adaptive immunity. In the arcuate nucleus of the hypothalamus, activates by depolarization POMC neurons inducing FOS and SOCS3 expression to release anorexigenic peptides and inhibits by hyperpolarization NPY neurons inducing SOCS3 with a consequent reduction on release of orexigenic peptides. In addition to its known satiety inducing effect, has a modulatory role in nutrient absorption. In the intestine, reduces glucose absorption by enterocytes by activating PKC and leading to a sequential activation of p38, PI3K and ERK signaling pathways which exerts an inhibitory effect on glucose absorption. Acts as a growth factor on certain tissues, through the activation of different signaling pathways increases expression of genes involved in cell cycle regulation such as CCND1, via JAK2-STAT3 pathway, or VEGFA, via MAPK1/3 and PI3K-AKT1 pathways. May also play an apoptotic role via JAK2-STAT3 pathway and up-regulation of BIRC5 expression. Pro-angiogenic, has mitogenic activity on vascular endothelial cells and plays a role in matrix remodeling by regulating the expression of matrix metalloproteinases (MMPs) and tissue inhibitors of metalloproteinases (TIMPs). In innate immunity, modulates the activity and function of neutrophils by increasing chemotaxis and the secretion of oxygen radicals. Increases phagocytosis by macrophages and enhances secretion of pro-inflammatory mediators. Increases cytotoxic ability of NK cells. Plays a pro-inflammatory role, in synergy with IL1B, by inducing NOS2 which promotes the production of IL6, IL8 and Prostaglandin E2, through a signaling pathway that involves JAK2, PI3K, MAP2K1/MEK1 and MAPK14/p38. In adaptive immunity, promotes the switch of memory T-cells towards T helper-1 cell immune responses. Increases CD4(+)CD25(-) T-cell proliferation and reduces autophagy during TCR (T-cell receptor) stimulation, through MTOR signaling pathway activation and BCL2 up-regulation. This Pan troglodytes (Chimpanzee) protein is Leptin (LEP).